The following is a 159-amino-acid chain: Large ribosomal subunit protein uL15 (159 aa).

Over residues 1–13 (MRLNELRDNDGAT) the composition is skewed to basic and acidic residues. The disordered stretch occupies residues 1 to 41 (MRLNELRDNDGATKIRTRVGRGIGSGKGKTGGRGVKGQKSR). Over residues 21-35 (RGIGSGKGKTGGRGV) the composition is skewed to gly residues.

The protein belongs to the universal ribosomal protein uL15 family. Part of the 50S ribosomal subunit.

Its function is as follows. Binds to the 23S rRNA. This chain is Large ribosomal subunit protein uL15, found in Maricaulis maris (strain MCS10) (Caulobacter maris).